The following is a 77-amino-acid chain: Translation initiation factor IF-1, chloroplastic (77 aa).

Residues 1–72 (MNKQGLFQME…TKGRIVYRQR (72 aa)) enclose the S1-like domain.

This sequence belongs to the IF-1 family. As to quaternary structure, component of the 30S ribosomal translation pre-initiation complex which assembles on the 30S ribosome in the order IF-2 and IF-3, IF-1 and N-formylmethionyl-tRNA(fMet); mRNA recruitment can occur at any time during PIC assembly.

The protein localises to the plastid. It is found in the chloroplast. Its function is as follows. One of the essential components for the initiation of protein synthesis. Stabilizes the binding of IF-2 and IF-3 on the 30S subunit to which N-formylmethionyl-tRNA(fMet) subsequently binds. Helps modulate mRNA selection, yielding the 30S pre-initiation complex (PIC). Upon addition of the 50S ribosomal subunit IF-1, IF-2 and IF-3 are released leaving the mature 70S translation initiation complex. This Nephroselmis olivacea (Green alga) protein is Translation initiation factor IF-1, chloroplastic.